We begin with the raw amino-acid sequence, 622 residues long: Chaperone protein HtpG (622 aa).

The tract at residues 1–334 (MKGQETRGFQ…SNDLPLNVSR (334 aa)) is a; substrate-binding. Positions 335 to 550 (EILQDSRITQ…ADEMSTQMAK (216 aa)) are b. The c stretch occupies residues 551 to 622 (LFAAAGQQAP…IRRMNQLLTA (72 aa)).

The protein belongs to the heat shock protein 90 family. In terms of assembly, homodimer.

It is found in the cytoplasm. Its function is as follows. Molecular chaperone. Has ATPase activity. In Yersinia pestis, this protein is Chaperone protein HtpG.